A 580-amino-acid chain; its full sequence is Proline--tRNA ligase (580 aa).

This sequence belongs to the class-II aminoacyl-tRNA synthetase family. ProS type 1 subfamily. As to quaternary structure, homodimer.

It is found in the cytoplasm. The catalysed reaction is tRNA(Pro) + L-proline + ATP = L-prolyl-tRNA(Pro) + AMP + diphosphate. Catalyzes the attachment of proline to tRNA(Pro) in a two-step reaction: proline is first activated by ATP to form Pro-AMP and then transferred to the acceptor end of tRNA(Pro). As ProRS can inadvertently accommodate and process non-cognate amino acids such as alanine and cysteine, to avoid such errors it has two additional distinct editing activities against alanine. One activity is designated as 'pretransfer' editing and involves the tRNA(Pro)-independent hydrolysis of activated Ala-AMP. The other activity is designated 'posttransfer' editing and involves deacylation of mischarged Ala-tRNA(Pro). The misacylated Cys-tRNA(Pro) is not edited by ProRS. The sequence is that of Proline--tRNA ligase from Polynucleobacter necessarius subsp. necessarius (strain STIR1).